Here is a 485-residue protein sequence, read N- to C-terminus: Apolipoprotein N-acyltransferase (485 aa).

The next 6 helical transmembrane spans lie at Ile8–Val28, Gly49–His69, Val76–Phe96, Trp121–Leu141, Phe157–Val177, and Ile186–Pro206. The CN hydrolase domain occupies Val220–Pro457. Glu259 (proton acceptor) is an active-site residue. The active site involves Lys317. Cys369 (nucleophile) is an active-site residue. The helical transmembrane segment at Leu464–Phe484 threads the bilayer.

This sequence belongs to the CN hydrolase family. Apolipoprotein N-acyltransferase subfamily.

It localises to the cell inner membrane. The catalysed reaction is N-terminal S-1,2-diacyl-sn-glyceryl-L-cysteinyl-[lipoprotein] + a glycerophospholipid = N-acyl-S-1,2-diacyl-sn-glyceryl-L-cysteinyl-[lipoprotein] + a 2-acyl-sn-glycero-3-phospholipid + H(+). It participates in protein modification; lipoprotein biosynthesis (N-acyl transfer). Functionally, catalyzes the phospholipid dependent N-acylation of the N-terminal cysteine of apolipoprotein, the last step in lipoprotein maturation. This chain is Apolipoprotein N-acyltransferase, found in Coxiella burnetii (strain RSA 493 / Nine Mile phase I).